A 211-amino-acid chain; its full sequence is Small ribosomal subunit protein uS3 (211 aa).

Residues 38–106 form the KH type-2 domain; the sequence is LRKFIKKAFY…NIELNIIEVK (69 aa).

Belongs to the universal ribosomal protein uS3 family. As to quaternary structure, part of the 30S ribosomal subunit. Forms a tight complex with proteins S10 and S14.

Functionally, binds the lower part of the 30S subunit head. Binds mRNA in the 70S ribosome, positioning it for translation. This Ehrlichia chaffeensis (strain ATCC CRL-10679 / Arkansas) protein is Small ribosomal subunit protein uS3.